The sequence spans 423 residues: Serine hydroxymethyltransferase (423 aa).

(6S)-5,6,7,8-tetrahydrofolate is bound by residues Leu126 and 130–132 (GHL). Lys235 bears the N6-(pyridoxal phosphate)lysine mark.

The protein belongs to the SHMT family. As to quaternary structure, homodimer. The cofactor is pyridoxal 5'-phosphate.

It localises to the cytoplasm. It catalyses the reaction (6R)-5,10-methylene-5,6,7,8-tetrahydrofolate + glycine + H2O = (6S)-5,6,7,8-tetrahydrofolate + L-serine. It participates in one-carbon metabolism; tetrahydrofolate interconversion. It functions in the pathway amino-acid biosynthesis; glycine biosynthesis; glycine from L-serine: step 1/1. Functionally, catalyzes the reversible interconversion of serine and glycine with tetrahydrofolate (THF) serving as the one-carbon carrier. This reaction serves as the major source of one-carbon groups required for the biosynthesis of purines, thymidylate, methionine, and other important biomolecules. Also exhibits THF-independent aldolase activity toward beta-hydroxyamino acids, producing glycine and aldehydes, via a retro-aldol mechanism. This chain is Serine hydroxymethyltransferase, found in Sorangium cellulosum (strain So ce56) (Polyangium cellulosum (strain So ce56)).